The primary structure comprises 412 residues: Phosphoglycerate kinase 1 (412 aa).

Residues 28–30, 65–68, Arg122, and Arg162 each bind substrate; these read DFN and HQGR. Residues Glu336 and 361 to 364 each bind ATP; that span reads GGHT.

This sequence belongs to the phosphoglycerate kinase family. Monomer.

It localises to the cytoplasm. The enzyme catalyses (2R)-3-phosphoglycerate + ATP = (2R)-3-phospho-glyceroyl phosphate + ADP. Its pathway is carbohydrate degradation; glycolysis; pyruvate from D-glyceraldehyde 3-phosphate: step 2/5. The protein is Phosphoglycerate kinase 1 of Methanosarcina acetivorans (strain ATCC 35395 / DSM 2834 / JCM 12185 / C2A).